Consider the following 299-residue polypeptide: Acetylglutamate kinase (299 aa).

Substrate-binding positions include 72–73 (GG), Arg94, and Asn196.

This sequence belongs to the acetylglutamate kinase family. ArgB subfamily.

It localises to the cytoplasm. The enzyme catalyses N-acetyl-L-glutamate + ATP = N-acetyl-L-glutamyl 5-phosphate + ADP. Its pathway is amino-acid biosynthesis; L-arginine biosynthesis; N(2)-acetyl-L-ornithine from L-glutamate: step 2/4. Its function is as follows. Catalyzes the ATP-dependent phosphorylation of N-acetyl-L-glutamate. This is Acetylglutamate kinase from Paraburkholderia phymatum (strain DSM 17167 / CIP 108236 / LMG 21445 / STM815) (Burkholderia phymatum).